The primary structure comprises 120 residues: Aspartate 1-decarboxylase (120 aa).

The active-site Schiff-base intermediate with substrate; via pyruvic acid is serine 25. Serine 25 carries the post-translational modification Pyruvic acid (Ser). Residue threonine 57 participates in substrate binding. Tyrosine 58 serves as the catalytic Proton donor. 73–75 is a substrate binding site; it reads GAA.

The protein belongs to the PanD family. In terms of assembly, heterooctamer of four alpha and four beta subunits. Requires pyruvate as cofactor. Is synthesized initially as an inactive proenzyme, which is activated by self-cleavage at a specific serine bond to produce a beta-subunit with a hydroxyl group at its C-terminus and an alpha-subunit with a pyruvoyl group at its N-terminus.

It is found in the cytoplasm. It catalyses the reaction L-aspartate + H(+) = beta-alanine + CO2. Its pathway is cofactor biosynthesis; (R)-pantothenate biosynthesis; beta-alanine from L-aspartate: step 1/1. Its function is as follows. Catalyzes the pyruvoyl-dependent decarboxylation of aspartate to produce beta-alanine. This is Aspartate 1-decarboxylase from Deinococcus deserti (strain DSM 17065 / CIP 109153 / LMG 22923 / VCD115).